The primary structure comprises 484 residues: Adenylosuccinate lyase (484 aa).

At Ala-2 the chain carries N-acetylalanine. Substrate-binding positions include 20–21 (RY), 85–87 (RHD), and 111–112 (TS). The residue at position 147 (Lys-147) is an N6-acetyllysine. The Proton donor/acceptor role is filled by His-159. Gln-241 is a substrate binding site. Ser-289 serves as the catalytic Proton donor/acceptor. Lys-295 is modified (N6-acetyllysine). Substrate is bound by residues Arg-303, Arg-329, Ser-334, and Arg-338. Lys-415 is covalently cross-linked (Glycyl lysine isopeptide (Lys-Gly) (interchain with G-Cter in SUMO1)).

The protein belongs to the lyase 1 family. Adenylosuccinate lyase subfamily. As to quaternary structure, homotetramer. Residues from neighboring subunits contribute catalytic and substrate-binding residues to each active site.

It carries out the reaction N(6)-(1,2-dicarboxyethyl)-AMP = fumarate + AMP. It catalyses the reaction (2S)-2-[5-amino-1-(5-phospho-beta-D-ribosyl)imidazole-4-carboxamido]succinate = 5-amino-1-(5-phospho-beta-D-ribosyl)imidazole-4-carboxamide + fumarate. It participates in purine metabolism; AMP biosynthesis via de novo pathway; AMP from IMP: step 2/2. The protein operates within purine metabolism; IMP biosynthesis via de novo pathway; 5-amino-1-(5-phospho-D-ribosyl)imidazole-4-carboxamide from 5-amino-1-(5-phospho-D-ribosyl)imidazole-4-carboxylate: step 2/2. Catalyzes two non-sequential steps in de novo AMP synthesis: converts (S)-2-(5-amino-1-(5-phospho-D-ribosyl)imidazole-4-carboxamido)succinate (SAICAR) to fumarate plus 5-amino-1-(5-phospho-D-ribosyl)imidazole-4-carboxamide, and thereby also contributes to de novo IMP synthesis, and converts succinyladenosine monophosphate (SAMP) to AMP and fumarate. This Macaca fascicularis (Crab-eating macaque) protein is Adenylosuccinate lyase (ADSL).